We begin with the raw amino-acid sequence, 276 residues long: NADPH-dependent 7-cyano-7-deazaguanine reductase (276 aa).

Residue 83 to 85 (IES) participates in substrate binding. Position 85–86 (85–86 (SK)) interacts with NADPH. Catalysis depends on C184, which acts as the Thioimide intermediate. D191 functions as the Proton donor in the catalytic mechanism. 223–224 (HE) lines the substrate pocket. Residue 252 to 253 (RG) participates in NADPH binding.

This sequence belongs to the GTP cyclohydrolase I family. QueF type 2 subfamily. As to quaternary structure, homodimer.

The protein localises to the cytoplasm. It carries out the reaction 7-aminomethyl-7-carbaguanine + 2 NADP(+) = 7-cyano-7-deazaguanine + 2 NADPH + 3 H(+). Its pathway is tRNA modification; tRNA-queuosine biosynthesis. In terms of biological role, catalyzes the NADPH-dependent reduction of 7-cyano-7-deazaguanine (preQ0) to 7-aminomethyl-7-deazaguanine (preQ1). The chain is NADPH-dependent 7-cyano-7-deazaguanine reductase from Pseudomonas putida (strain ATCC 700007 / DSM 6899 / JCM 31910 / BCRC 17059 / LMG 24140 / F1).